A 586-amino-acid chain; its full sequence is Ezrin (586 aa).

The region spanning 2 to 295 is the FERM domain; that stretch reads PKPINVRVTT…GNHELYMRRR (294 aa). Lys60 is subject to N6-acetyllysine. Residues 115 to 120 carry the [IL]-x-C-x-x-[DE] motif motif; that stretch reads IYCPPE. Tyr146 is modified (phosphotyrosine; by PDGFR). The interaction with SCYL3 stretch occupies residues 244–586; sequence EIRNISFNDK…KQRIDEFEAM (343 aa). Residues 302–462 are a coiled coil; the sequence is VQQMKAQARE…QDDLVKTKEE (161 aa). The interval 306–338 is disordered; that stretch reads KAQAREEKHQKQLERQQLETEKKRRETVEREKE. The segment covering 308 to 338 has biased composition (basic and acidic residues); the sequence is QAREEKHQKQLERQQLETEKKRRETVEREKE. Tyr354 carries the phosphotyrosine; by PDGFR modification. Ser366 bears the Phosphoserine mark. Tyr478 is subject to Phosphotyrosine. The segment at 534-565 is disordered; that stretch reads LSNELSQARDENKRTHNDIIHNENMRQGRDKY. Ser535 bears the Phosphoserine mark. The span at 540 to 565 shows a compositional bias: basic and acidic residues; sequence QARDENKRTHNDIIHNENMRQGRDKY. A Phosphothreonine; by ROCK2 and PKC/PRKCI modification is found at Thr567.

Interacts with PALS1 and NHERF2. Found in a complex with EZR, PODXL and NHERF2. Interacts with MCC, PLEKHG6, PODXL, SCYL3/PACE1, NHERF1 and TMEM8B. Interacts (when phosphorylated) with FES/FPS. Interacts with dimeric S100P, the interaction may be activating through unmasking of F-actin binding sites. Identified in complexes that contain VIM, EZR, AHNAK, BFSP1, BFSP2, ANK2, PLEC, PRX and spectrin. Detected in a complex composed of at least EZR, AHNAK, PPL and PRX. Interacts with PDPN (via cytoplasmic domain); activates RHOA and promotes epithelial-mesenchymal transition. Interacts with SPN/CD43 cytoplasmic tail. Interacts with CD44 and ICAM2. Interacts with SLC9A3; interaction targets SLC9A3 to the apical membrane. Interacts with SLC9A1; regulates interactions of SLC9A1 with cytoskeletal and promotes stress fiber formation. Interacts with CLIC5; may work together in a complex which also includes RDX and MYO6 to stabilize linkages between the plasma membrane and subjacent actin cytoskeleton at the base of stereocilia. Phosphorylated by tyrosine-protein kinases. Phosphorylation by ROCK2 suppresses the head-to-tail association of the N-terminal and C-terminal halves resulting in an opened conformation which is capable of actin and membrane-binding. In terms of processing, S-nitrosylation is induced by interferon-gamma and oxidatively-modified low-densitity lipoprotein (LDL(ox)) possibly implicating the iNOS-S100A8/9 transnitrosylase complex. In terms of tissue distribution, detected in eye lens fiber cells. Expressed in cerebrum and cerebellum (at protein level). Component of the microvilli of intestinal epithelial cells.

The protein resides in the apical cell membrane. The protein localises to the cell projection. It localises to the microvillus membrane. Its subcellular location is the ruffle membrane. It is found in the cytoplasm. The protein resides in the cell cortex. The protein localises to the cytoskeleton. It localises to the microvillus. A head-to-tail association, of the N-terminal and C-terminal halves results in a closed conformation (inactive form) which is incapable of actin or membrane-binding. Functionally, probably involved in connections of major cytoskeletal structures to the plasma membrane. In epithelial cells, required for the formation of microvilli and membrane ruffles on the apical pole. Along with PLEKHG6, required for normal macropinocytosis. The sequence is that of Ezrin (Ezr) from Mus musculus (Mouse).